Here is a 393-residue protein sequence, read N- to C-terminus: NAD(P)H-quinone oxidoreductase subunit H, chloroplastic (393 aa).

Belongs to the complex I 49 kDa subunit family. In terms of assembly, NDH is composed of at least 16 different subunits, 5 of which are encoded in the nucleus.

The protein resides in the plastid. It localises to the chloroplast thylakoid membrane. The catalysed reaction is a plastoquinone + NADH + (n+1) H(+)(in) = a plastoquinol + NAD(+) + n H(+)(out). It carries out the reaction a plastoquinone + NADPH + (n+1) H(+)(in) = a plastoquinol + NADP(+) + n H(+)(out). Functionally, NDH shuttles electrons from NAD(P)H:plastoquinone, via FMN and iron-sulfur (Fe-S) centers, to quinones in the photosynthetic chain and possibly in a chloroplast respiratory chain. The immediate electron acceptor for the enzyme in this species is believed to be plastoquinone. Couples the redox reaction to proton translocation, and thus conserves the redox energy in a proton gradient. The protein is NAD(P)H-quinone oxidoreductase subunit H, chloroplastic of Vitis vinifera (Grape).